A 232-amino-acid polypeptide reads, in one-letter code: Orotate phosphoribosyltransferase (232 aa).

Residues Arg107, Lys108, Lys111, His113, and 133-141 each bind 5-phospho-alpha-D-ribose 1-diphosphate; that span reads EDLTTAGGS. Thr137 is a binding site for orotate.

This sequence belongs to the purine/pyrimidine phosphoribosyltransferase family. PyrE subfamily. As to quaternary structure, homodimer. Mg(2+) is required as a cofactor.

It catalyses the reaction orotidine 5'-phosphate + diphosphate = orotate + 5-phospho-alpha-D-ribose 1-diphosphate. The protein operates within pyrimidine metabolism; UMP biosynthesis via de novo pathway; UMP from orotate: step 1/2. Functionally, catalyzes the transfer of a ribosyl phosphate group from 5-phosphoribose 1-diphosphate to orotate, leading to the formation of orotidine monophosphate (OMP). The sequence is that of Orotate phosphoribosyltransferase from Sinorhizobium fredii (strain NBRC 101917 / NGR234).